Here is a 151-residue protein sequence, read N- to C-terminus: Thymosin beta (151 aa).

4 consecutive repeat copies span residues 24–29 (LKKVET), 62–67 (LHSTPV), 100–105 (LKKTET), and 134–139 (LHHVET). The segment at 24–139 (LKKVETTEKN…DKSALHHVET (116 aa)) is 4 X 6 AA repeat of L-[KH]-[KSH]-[VT]-[EP]-[TV].

The protein belongs to the thymosin beta family. As to quaternary structure, interacts (via repeats 1, 2 and 4) with G-actin in a 1:3 ratio. Interacts (via repeats 2 and 3) with F-actin. In terms of tissue distribution, at the comma stage, enriched in the developing nerve ring (at protein level). Ubiquitously expressed in larvae and adults with enrichment in the spermatheca, the intestinal tract and the posterior bulb of the pharynx (at protein level). Expressed in oocytes and in the gonad (at protein level).

It is found in the cytoplasm. The protein resides in the cell cortex. It localises to the cell junction. The protein localises to the cytoskeleton. Plays an important role in the organization of the cytoskeleton by regulating actin polymerization in two ways. Firstly, by binding to and sequestering actin monomers (G actin) inhibits actin polymerization. Secondly, by binding directly filamentous actin (F actin) promotes actin polymerization. Regulates the formation of cortical actin in oocytes conferring them enough rigidity to sustain the contractions during ovulation. The protein is Thymosin beta of Caenorhabditis elegans.